The primary structure comprises 250 residues: Cobalt transport protein CbiM (250 aa).

A signal peptide spans 1–24; the sequence is MKYWGTALLGAFCVFFFTPNTAYA. The next 6 membrane-spanning stretches (helical) occupy residues 32–52, 67–87, 99–119, 122–142, 161–181, and 203–223; these read LPAG…FWGI, MLLG…IPSV, LGAI…VLLF, LLLA…MGVM, VAVF…TSLQ, and IFAI…VFVF.

This sequence belongs to the CbiM family. In terms of assembly, forms an energy-coupling factor (ECF) transporter complex composed of an ATP-binding protein (A component, CbiO), a transmembrane protein (T component, CbiQ) and 2 possible substrate-capture proteins (S components, CbiM and CbiN) of unknown stoichimetry.

The protein resides in the cell membrane. The protein operates within cofactor biosynthesis; adenosylcobalamin biosynthesis. In terms of biological role, part of the energy-coupling factor (ECF) transporter complex CbiMNOQ involved in cobalt import. The chain is Cobalt transport protein CbiM from Desulforamulus reducens (strain ATCC BAA-1160 / DSM 100696 / MI-1) (Desulfotomaculum reducens).